The chain runs to 365 residues: Large ribosomal subunit protein uL3 (365 aa).

Positions 343-365 (RPPKKKPPVQRPQITYVSVESKQ) are disordered. Over residues 354 to 365 (PQITYVSVESKQ) the composition is skewed to polar residues.

Belongs to the universal ribosomal protein uL3 family. In terms of assembly, part of the 50S ribosomal subunit. Forms a cluster with proteins L14 and L24e.

One of the primary rRNA binding proteins, it binds directly near the 3'-end of the 23S rRNA, where it nucleates assembly of the 50S subunit. The sequence is that of Large ribosomal subunit protein uL3 from Pyrococcus furiosus (strain ATCC 43587 / DSM 3638 / JCM 8422 / Vc1).